Consider the following 276-residue polypeptide: Large ribosomal subunit protein uL2 (276 aa).

The interval 224 to 276 (AMNPVDHPLGGGEGKSSGGRHPVTPWGKPTKGYKTRNKKKPSSKLIVKRRGQK) is disordered. The span at 254–276 (KGYKTRNKKKPSSKLIVKRRGQK) shows a compositional bias: basic residues.

Belongs to the universal ribosomal protein uL2 family. Part of the 50S ribosomal subunit. Forms a bridge to the 30S subunit in the 70S ribosome.

One of the primary rRNA binding proteins. Required for association of the 30S and 50S subunits to form the 70S ribosome, for tRNA binding and peptide bond formation. It has been suggested to have peptidyltransferase activity; this is somewhat controversial. Makes several contacts with the 16S rRNA in the 70S ribosome. The chain is Large ribosomal subunit protein uL2 from Solidesulfovibrio magneticus (strain ATCC 700980 / DSM 13731 / RS-1) (Desulfovibrio magneticus).